The primary structure comprises 337 residues: ELAV-like protein 1-A (337 aa).

RRM domains lie at 20-109, 117-197, and 255-333; these read TNLI…FARP, ANLY…FAAN, and WCIF…FKTS.

The protein belongs to the RRM elav family. In terms of assembly, interacts (via RRM3) with cirbp. Unable to form oligomers. Part of a ribonucleoprotein (RNP) complex, at least composed of elavl1/elrA and/or elavl2/elrB, igf2bp3/vg1RBP, ddx6/Xp54, ybx2/frgy2, lsm14b/rap55b and, in a subset of RNP complexes, stau1/staufen. As to expression, ubiquitously expressed in adults.

Its subcellular location is the cytoplasm. It is found in the cell cortex. RNA-binding protein that binds to the 3'-UTR region of mRNAs and increases their stability. Involved in embryonic stem cells (ESCs) differentiation: preferentially binds mRNAs that are not methylated by N6-methyladenosine (m6A), stabilizing them, promoting ESCs differentiation. Binds to poly-U elements and AU-rich elements (AREs) in the 3'-UTR of target mRNAs. May be involved in cytoplasmic mRNA polyadenylation. Acts cooperatively with cribp to stabilize AU-rich sequence (ARE)-containing mRNAs. May play a role during gastrulation. Required for the vegetal localization of vg1 mRNA. This Xenopus laevis (African clawed frog) protein is ELAV-like protein 1-A (elavl1-a).